A 101-amino-acid polypeptide reads, in one-letter code: uncharacterized protein (101 aa).

An N-terminal signal peptide occupies residues 1–27 (MQLTGSIYPWFTAYALLKSTLMELINS). The next 2 membrane-spanning stretches (helical) occupy residues 42–64 (LVPY…AISF) and 79–98 (TFVF…NTFL).

It is found in the cytoplasm. It localises to the nucleus membrane. This is an uncharacterized protein from Schizosaccharomyces pombe (strain 972 / ATCC 24843) (Fission yeast).